The following is a 90-amino-acid chain: Small ribosomal subunit protein uS19 (90 aa).

Belongs to the universal ribosomal protein uS19 family.

Protein S19 forms a complex with S13 that binds strongly to the 16S ribosomal RNA. The chain is Small ribosomal subunit protein uS19 from Clostridium beijerinckii (strain ATCC 51743 / NCIMB 8052) (Clostridium acetobutylicum).